A 216-amino-acid chain; its full sequence is DNA replication complex GINS protein psf1 (216 aa).

Residues 110 to 133 (QTTGGPKGVTEGNEGGGTTSSLSP) are disordered. Gly residues predominate over residues 111–127 (TTGGPKGVTEGNEGGGT).

The protein belongs to the GINS1/PSF1 family. In terms of assembly, component of the GINS complex which is a heterotetramer of div-26/sld5, drc-1/psf1, drc-2/psf2 and drc-3/psf3.

It localises to the nucleus. The GINS complex plays an essential role in the initiation of DNA replication. The protein is DNA replication complex GINS protein psf1 (drc-1) of Neurospora crassa (strain ATCC 24698 / 74-OR23-1A / CBS 708.71 / DSM 1257 / FGSC 987).